A 242-amino-acid polypeptide reads, in one-letter code: DNA repair protein RecO (242 aa).

It belongs to the RecO family.

In terms of biological role, involved in DNA repair and RecF pathway recombination. The chain is DNA repair protein RecO from Methylococcus capsulatus (strain ATCC 33009 / NCIMB 11132 / Bath).